The primary structure comprises 95 residues: DNA/RNA-binding protein Alba (95 aa).

Lysine 13 bears the N6-acetyllysine mark.

This sequence belongs to the histone-like Alba family. In terms of processing, acetylated. Acetylation at Lys-13 decreases DNA-binding affinity.

The protein localises to the cytoplasm. The protein resides in the chromosome. Functionally, binds double-stranded DNA tightly but without sequence specificity. Involved in DNA compaction. The polypeptide is DNA/RNA-binding protein Alba (Nitrosopumilus maritimus (strain SCM1)).